The following is a 780-amino-acid chain: RNA-binding protein Pasilla (780 aa).

3 disordered regions span residues 31–50 (LQHQ…QQLE), 76–113 (QPRH…SSSI), and 150–190 (QIES…ATAS). Composition is skewed to low complexity over residues 79-91 (HSTT…STHS), 99-113 (SSNS…SSSI), and 176-190 (PNGT…ATAS). KH domains lie at 273–340 (TYHM…MEFI), 366–432 (DKQV…CKMI), and 691–758 (KDSK…QYLI). The segment at 674–693 (AQLGGLSKSPTPGDLSSKDS) is disordered. Residues 686 to 776 (GDLSSKDSKN…TKRARQIPLT (91 aa)) are required for RNA binding.

As to expression, expressed in the central nervous system in mushroom body neurons (at protein level).

It localises to the nucleus. It is found in the cytoplasm. Functions to regulate alternative splicing in neurons by binding pre-mRNA in a sequence-specific manner to activate exon inclusion. Plays a role in long-term memory formation by processing the unspliced Orb2-isoform A (Orb2A) mRNA and thereby controlling Orb2A protein abundance. This Drosophila melanogaster (Fruit fly) protein is RNA-binding protein Pasilla.